We begin with the raw amino-acid sequence, 841 residues long: Homeobox-leucine zipper protein ATHB-9 (841 aa).

Basic and acidic residues predominate over residues 1 to 18; that stretch reads MMAHHSMDDRDSPDKGFD. The tract at residues 1–21 is disordered; that stretch reads MMAHHSMDDRDSPDKGFDSGK. Residues 18–81 constitute a DNA-binding region (homeobox); the sequence is DSGKYVRYTP…NRRCREKQRK (64 aa). Residues 85–118 adopt a coiled-coil conformation; sequence RLQTVNRKLSAMNKLLMEENDRLQKQVSNLVYEN. Disordered regions lie at residues 140–162 and 602–630; these read VVVS…RDVN and DQKT…TKTD. Over residues 145–155 the composition is skewed to low complexity; that stretch reads QQRQQQNPTHQ. The START domain occupies 160-388; that stretch reads DVNNPANLLS…IAQETSGEVQ (229 aa). Residues 603–614 show a composition bias toward polar residues; the sequence is QKTNPNDHQSAS.

Belongs to the HD-ZIP homeobox family. Class III subfamily. In terms of assembly, binds DNA as homodimer. Interacts with ESR1 and ESR2. Interacts with ZPR3.

It localises to the nucleus. Functionally, probable transcription factor involved in the determination of adaxial-abaxial polarity in ovule primordium. Specifies adaxial leaf fates. Binds to the DNA sequence 5'-GTAAT[GC]ATTAC-3'. The sequence is that of Homeobox-leucine zipper protein ATHB-9 (ATHB-9) from Arabidopsis thaliana (Mouse-ear cress).